The sequence spans 388 residues: F-box protein ETP2 (388 aa).

The F-box domain maps to 2–48; sequence KTIQEQLPNDLVEEILCRVPATSLRRLRSTCKAWNRLFKGDRILASK.

In terms of assembly, interacts with EIN2 (via C-terminus).

Negative regulator of EIN2 protein stability. This is F-box protein ETP2 from Arabidopsis thaliana (Mouse-ear cress).